A 381-amino-acid chain; its full sequence is Pulmonary surfactant-associated protein B (381 aa).

A signal peptide spans 1–24; the sequence is MAESHLLQWLLLLLPTLCGPGTAA. The 41-residue stretch at 25–65 folds into the Saposin A-type domain; that stretch reads WTTSSLACAQGPEFWCQSLEQALQCRALGHCLQEVWGHVGA. A propeptide spanning residues 25 to 200 is cleaved from the precursor; sequence WTTSSLACAQ…PHTQDLSEQQ (176 aa). 3 Saposin B-type domains span residues 65-147, 204-281, and 295-370; these read ADDL…KSRQ, PLPY…SMDD, and RDSE…GTMS. Intrachain disulfides connect Cys69–Cys143, Cys72–Cys137, Cys100–Cys112, Cys208–Cys277, Cys211–Cys271, Cys235–Cys246, Cys299–Cys366, Cys302–Cys360, and Cys325–Cys335. Residue Asn129 is glycosylated (N-linked (GlcNAc...) asparagine). A propeptide spanning residues 280-381 is cleaved from the precursor; the sequence is DDSAGPRSPT…PLQCIHSPDL (102 aa). An N-linked (GlcNAc...) asparagine glycan is attached at Asn311.

In terms of assembly, homodimer; disulfide-linked.

The protein resides in the secreted. The protein localises to the extracellular space. It is found in the surface film. Functionally, pulmonary surfactant-associated proteins promote alveolar stability by lowering the surface tension at the air-liquid interface in the peripheral air spaces. SP-B increases the collapse pressure of palmitic acid to nearly 70 millinewtons per meter. The sequence is that of Pulmonary surfactant-associated protein B (SFTPB) from Homo sapiens (Human).